We begin with the raw amino-acid sequence, 422 residues long: Zinc finger protein 550 (422 aa).

The KRAB domain occupies Val-12–Ala-83. A disordered region spans residues Leu-113–Glu-158. Positions Arg-122 to Leu-152 are enriched in basic and acidic residues. C2H2-type zinc fingers lie at residues Tyr-203–His-225, Tyr-231–His-253, Tyr-259–His-281, Tyr-287–His-309, Phe-315–His-337, Tyr-343–His-365, Tyr-371–His-393, and Tyr-399–His-421.

Belongs to the krueppel C2H2-type zinc-finger protein family.

It localises to the nucleus. Functionally, may be involved in transcriptional regulation. The protein is Zinc finger protein 550 (ZNF550) of Homo sapiens (Human).